The sequence spans 579 residues: Glutamate--tRNA ligase (579 aa).

The 'HIGH' region motif lies at 114 to 124 (PNPNGPWHIGH).

It belongs to the class-I aminoacyl-tRNA synthetase family. Glutamate--tRNA ligase type 2 subfamily.

It localises to the cytoplasm. It catalyses the reaction tRNA(Glu) + L-glutamate + ATP = L-glutamyl-tRNA(Glu) + AMP + diphosphate. Its function is as follows. Catalyzes the attachment of glutamate to tRNA(Glu) in a two-step reaction: glutamate is first activated by ATP to form Glu-AMP and then transferred to the acceptor end of tRNA(Glu). The chain is Glutamate--tRNA ligase from Haloarcula marismortui (strain ATCC 43049 / DSM 3752 / JCM 8966 / VKM B-1809) (Halobacterium marismortui).